The primary structure comprises 98 residues: NADH-ubiquinone oxidoreductase chain 4L (98 aa).

A run of 3 helical transmembrane segments spans residues 1–21 (MSLV…GLLM), 29–49 (ALLC…LTIL), and 61–81 (IILL…LVTI).

The protein belongs to the complex I subunit 4L family. In terms of assembly, core subunit of respiratory chain NADH dehydrogenase (Complex I) which is composed of 45 different subunits.

Its subcellular location is the mitochondrion inner membrane. The catalysed reaction is a ubiquinone + NADH + 5 H(+)(in) = a ubiquinol + NAD(+) + 4 H(+)(out). In terms of biological role, core subunit of the mitochondrial membrane respiratory chain NADH dehydrogenase (Complex I) which catalyzes electron transfer from NADH through the respiratory chain, using ubiquinone as an electron acceptor. Part of the enzyme membrane arm which is embedded in the lipid bilayer and involved in proton translocation. The polypeptide is NADH-ubiquinone oxidoreductase chain 4L (MT-ND4L) (Ziphius cavirostris (Cuvier's beaked whale)).